Consider the following 100-residue polypeptide: MIREERLLKVLRAPHVSEKASMAMEKNNTIVLKVATDATKAEIKAAVKKLFEVEVDTVRTLVVKGKVKRHGQRIGRRSDWKKAYVTLKEGQNLDFIGGAE.

Belongs to the universal ribosomal protein uL23 family. Part of the 50S ribosomal subunit. Contacts protein L29, and trigger factor when it is bound to the ribosome.

One of the early assembly proteins it binds 23S rRNA. One of the proteins that surrounds the polypeptide exit tunnel on the outside of the ribosome. Forms the main docking site for trigger factor binding to the ribosome. The polypeptide is Large ribosomal subunit protein uL23 (Edwardsiella ictaluri (strain 93-146)).